The sequence spans 429 residues: Glutamate-1-semialdehyde 2,1-aminomutase 2 (429 aa).

K268 carries the post-translational modification N6-(pyridoxal phosphate)lysine.

The protein belongs to the class-III pyridoxal-phosphate-dependent aminotransferase family. HemL subfamily. Homodimer. It depends on pyridoxal 5'-phosphate as a cofactor.

Its subcellular location is the cytoplasm. The enzyme catalyses (S)-4-amino-5-oxopentanoate = 5-aminolevulinate. The protein operates within porphyrin-containing compound metabolism; protoporphyrin-IX biosynthesis; 5-aminolevulinate from L-glutamyl-tRNA(Glu): step 2/2. The chain is Glutamate-1-semialdehyde 2,1-aminomutase 2 from Staphylococcus aureus (strain bovine RF122 / ET3-1).